We begin with the raw amino-acid sequence, 324 residues long: tRNA U34 carboxymethyltransferase (324 aa).

Residues Lys-92, Trp-106, Lys-111, Gly-131, 181 to 182 (LE), Met-197, Tyr-201, and Arg-316 each bind carboxy-S-adenosyl-L-methionine.

The protein belongs to the class I-like SAM-binding methyltransferase superfamily. CmoB family. In terms of assembly, homotetramer.

The enzyme catalyses carboxy-S-adenosyl-L-methionine + 5-hydroxyuridine(34) in tRNA = 5-carboxymethoxyuridine(34) in tRNA + S-adenosyl-L-homocysteine + H(+). Catalyzes carboxymethyl transfer from carboxy-S-adenosyl-L-methionine (Cx-SAM) to 5-hydroxyuridine (ho5U) to form 5-carboxymethoxyuridine (cmo5U) at position 34 in tRNAs. The chain is tRNA U34 carboxymethyltransferase from Syntrophotalea carbinolica (strain DSM 2380 / NBRC 103641 / GraBd1) (Pelobacter carbinolicus).